A 131-amino-acid chain; its full sequence is Small ribosomal subunit protein uS8 (131 aa).

Belongs to the universal ribosomal protein uS8 family. As to quaternary structure, part of the 30S ribosomal subunit. Contacts proteins S5 and S12.

In terms of biological role, one of the primary rRNA binding proteins, it binds directly to 16S rRNA central domain where it helps coordinate assembly of the platform of the 30S subunit. The chain is Small ribosomal subunit protein uS8 from Nitrosospira multiformis (strain ATCC 25196 / NCIMB 11849 / C 71).